The following is a 1405-amino-acid chain: DNA-directed RNA polymerase subunit beta' (1405 aa).

Positions 71, 73, 86, and 89 each coordinate Zn(2+). Mg(2+) is bound by residues D462, D464, and D466. Residues C810, C884, C891, and C894 each coordinate Zn(2+).

Belongs to the RNA polymerase beta' chain family. The RNAP catalytic core consists of 2 alpha, 1 beta, 1 beta' and 1 omega subunit. When a sigma factor is associated with the core the holoenzyme is formed, which can initiate transcription. Requires Mg(2+) as cofactor. It depends on Zn(2+) as a cofactor.

The catalysed reaction is RNA(n) + a ribonucleoside 5'-triphosphate = RNA(n+1) + diphosphate. Functionally, DNA-dependent RNA polymerase catalyzes the transcription of DNA into RNA using the four ribonucleoside triphosphates as substrates. In Maricaulis maris (strain MCS10) (Caulobacter maris), this protein is DNA-directed RNA polymerase subunit beta'.